Here is a 400-residue protein sequence, read N- to C-terminus: Bifunctional enzyme IspD/IspF (400 aa).

The 2-C-methyl-D-erythritol 4-phosphate cytidylyltransferase stretch occupies residues 1 to 244 (MSHRVLGTER…LLKERDKMDI (244 aa)). The interval 245 to 400 (RTGNGYDVHR…ALATVTLVRT (156 aa)) is 2-C-methyl-D-erythritol 2,4-cyclodiphosphate synthase. Residues Asp251 and His253 each contribute to the a divalent metal cation site. 4-CDP-2-C-methyl-D-erythritol 2-phosphate contacts are provided by residues 251–253 (DVH) and 277–278 (HS). His285 contributes to the a divalent metal cation binding site. Residues 299-301 (DIG), 375-378 (TTSE), Phe382, and Arg385 each bind 4-CDP-2-C-methyl-D-erythritol 2-phosphate.

It in the N-terminal section; belongs to the IspD/TarI cytidylyltransferase family. IspD subfamily. This sequence in the C-terminal section; belongs to the IspF family. Requires a divalent metal cation as cofactor.

It catalyses the reaction 2-C-methyl-D-erythritol 4-phosphate + CTP + H(+) = 4-CDP-2-C-methyl-D-erythritol + diphosphate. It carries out the reaction 4-CDP-2-C-methyl-D-erythritol 2-phosphate = 2-C-methyl-D-erythritol 2,4-cyclic diphosphate + CMP. It functions in the pathway isoprenoid biosynthesis; isopentenyl diphosphate biosynthesis via DXP pathway; isopentenyl diphosphate from 1-deoxy-D-xylulose 5-phosphate: step 2/6. Its pathway is isoprenoid biosynthesis; isopentenyl diphosphate biosynthesis via DXP pathway; isopentenyl diphosphate from 1-deoxy-D-xylulose 5-phosphate: step 4/6. Its function is as follows. Bifunctional enzyme that catalyzes the formation of 4-diphosphocytidyl-2-C-methyl-D-erythritol from CTP and 2-C-methyl-D-erythritol 4-phosphate (MEP) (IspD), and catalyzes the conversion of 4-diphosphocytidyl-2-C-methyl-D-erythritol 2-phosphate (CDP-ME2P) to 2-C-methyl-D-erythritol 2,4-cyclodiphosphate (ME-CPP) with a corresponding release of cytidine 5-monophosphate (CMP) (IspF). This chain is Bifunctional enzyme IspD/IspF, found in Dinoroseobacter shibae (strain DSM 16493 / NCIMB 14021 / DFL 12).